The primary structure comprises 132 residues: Small ribosomal subunit protein uS8 (132 aa).

The protein belongs to the universal ribosomal protein uS8 family. As to quaternary structure, part of the 30S ribosomal subunit. Contacts proteins S5 and S12.

One of the primary rRNA binding proteins, it binds directly to 16S rRNA central domain where it helps coordinate assembly of the platform of the 30S subunit. The protein is Small ribosomal subunit protein uS8 of Acidobacterium capsulatum (strain ATCC 51196 / DSM 11244 / BCRC 80197 / JCM 7670 / NBRC 15755 / NCIMB 13165 / 161).